We begin with the raw amino-acid sequence, 394 residues long: GDNF family receptor alpha-like (394 aa).

Positions 1-18 (MIVFIFLAMGLSLENEYT) are cleaved as a signal peptide. At 19–351 (SQTNNCTYLR…TGFHSPFNGE (333 aa)) the chain is on the extracellular side. Residues N23, N50, N62, N67, N103, and N116 are each glycosylated (N-linked (GlcNAc...) asparagine). Disulfide bonds link C131–C189, C138–C144, C155–C167, C162–C210, C191–C198, C220–C291, C227–C233, C244–C275, C252–C258, C269–C316, and C293–C304. The tract at residues 149–228 (ASYLKACSAN…TCLSVIRSCQ (80 aa)) is required for interaction with GDF15. The chain crosses the membrane as a helical span at residues 352–371 (VIYAAMCMTVTCGILLLVMV). Residues 372–394 (KLRTSRISSKARDPSSIQIPGEL) are Cytoplasmic-facing.

The protein belongs to the GDNFR family. Interacts (via the extracellular domain) with GDF15 and RET; receptor of GDF15, mediates cellular signaling through interaction with RET after GDF15-binding. Interaction with RET requires previous GDF15-binding. In terms of processing, cleaved and inactivated by MMP14, inhibiting the GDF15-GFRAL aversive response. Expressed in the brainstem, restricted to cells in the area postrema and the immediately adjacent region of the nucleus tractus solitarius (at protein level). Detected at low levels in testis and adipose tissue.

It localises to the cell membrane. Its activity is regulated as follows. Specifically inhibited by 3P10 monoclonal antibody. Strongly activated by LY3463251, a long-acting and stable agonist composed of GDF15 conjugated monomeric human IgG4 Fc. Brainstem-restricted receptor for GDF15 hormone, which triggers an aversive response, characterized by nausea, vomiting, and/or loss of appetite in response to various stresses. The aversive response is both required to reduce continuing exposure to those stresses at the time of exposure and to promote avoidance behavior in the future. The GDF15-GFRAL aversive response is triggered by stresses, such as anticancer drugs (camptothecin or cisplatin), cancers or drugs such as metformin. Upon interaction with its ligand, GDF15, mediates the GDF15-induced autophosphorylation and activation of the RET tyrosine kinase receptor, leading to activation of MAPK- and AKT- signaling pathways. Ligand-binding activates GFRAL-expressing neurons localized in the area postrema and nucleus tractus solitarius of the brainstem. The GDF15-GFRAL signal induces expression of genes involved in metabolism, such as lipid metabolism in adipose tissues. The chain is GDNF family receptor alpha-like from Homo sapiens (Human).